The primary structure comprises 412 residues: Tryptophan synthase beta chain (412 aa).

Position 105 is an N6-(pyridoxal phosphate)lysine (K105).

This sequence belongs to the TrpB family. In terms of assembly, tetramer of two alpha and two beta chains. Requires pyridoxal 5'-phosphate as cofactor.

The catalysed reaction is (1S,2R)-1-C-(indol-3-yl)glycerol 3-phosphate + L-serine = D-glyceraldehyde 3-phosphate + L-tryptophan + H2O. Its pathway is amino-acid biosynthesis; L-tryptophan biosynthesis; L-tryptophan from chorismate: step 5/5. Its function is as follows. The beta subunit is responsible for the synthesis of L-tryptophan from indole and L-serine. This is Tryptophan synthase beta chain (trpB) from Synechocystis sp. (strain ATCC 27184 / PCC 6803 / Kazusa).